The chain runs to 434 residues: Serine hydroxymethyltransferase 1 (434 aa).

(6S)-5,6,7,8-tetrahydrofolate is bound by residues Leu-136 and 140-142; that span reads GHL. An N6-(pyridoxal phosphate)lysine modification is found at Lys-245.

Belongs to the SHMT family. In terms of assembly, homodimer. Requires pyridoxal 5'-phosphate as cofactor.

The protein localises to the cytoplasm. It catalyses the reaction (6R)-5,10-methylene-5,6,7,8-tetrahydrofolate + glycine + H2O = (6S)-5,6,7,8-tetrahydrofolate + L-serine. Its pathway is one-carbon metabolism; tetrahydrofolate interconversion. The protein operates within amino-acid biosynthesis; glycine biosynthesis; glycine from L-serine: step 1/1. Functionally, catalyzes the reversible interconversion of serine and glycine with tetrahydrofolate (THF) serving as the one-carbon carrier. This reaction serves as the major source of one-carbon groups required for the biosynthesis of purines, thymidylate, methionine, and other important biomolecules. Also exhibits THF-independent aldolase activity toward beta-hydroxyamino acids, producing glycine and aldehydes, via a retro-aldol mechanism. The polypeptide is Serine hydroxymethyltransferase 1 (Rhodospirillum rubrum (strain ATCC 11170 / ATH 1.1.1 / DSM 467 / LMG 4362 / NCIMB 8255 / S1)).